We begin with the raw amino-acid sequence, 454 residues long: tRNA modification GTPase MnmE (454 aa).

(6S)-5-formyl-5,6,7,8-tetrahydrofolate contacts are provided by arginine 23, glutamate 80, and lysine 120. The region spanning glycine 216–glycine 377 is the TrmE-type G domain. K(+) is bound at residue asparagine 226. Residues asparagine 226 to serine 231, threonine 245 to threonine 251, aspartate 270 to glycine 273, asparagine 335 to aspartate 338, and serine 358 to arginine 360 each bind GTP. A Mg(2+)-binding site is contributed by serine 230. K(+) contacts are provided by threonine 245, isoleucine 247, and threonine 250. Residue threonine 251 participates in Mg(2+) binding. Lysine 454 is a (6S)-5-formyl-5,6,7,8-tetrahydrofolate binding site.

Belongs to the TRAFAC class TrmE-Era-EngA-EngB-Septin-like GTPase superfamily. TrmE GTPase family. In terms of assembly, homodimer. Heterotetramer of two MnmE and two MnmG subunits. K(+) serves as cofactor.

Its subcellular location is the cytoplasm. Its function is as follows. Exhibits a very high intrinsic GTPase hydrolysis rate. Involved in the addition of a carboxymethylaminomethyl (cmnm) group at the wobble position (U34) of certain tRNAs, forming tRNA-cmnm(5)s(2)U34. This Klebsiella pneumoniae subsp. pneumoniae (strain ATCC 700721 / MGH 78578) protein is tRNA modification GTPase MnmE.